An 85-amino-acid polypeptide reads, in one-letter code: F1845 adhesin operon regulatory protein (85 aa).

In terms of biological role, regulates the transcription of genes involved in the biosynthesis of F1845 fimbrial adhesin. This is F1845 adhesin operon regulatory protein (daaA) from Escherichia coli.